A 431-amino-acid polypeptide reads, in one-letter code: Glutamate-1-semialdehyde 2,1-aminomutase (431 aa).

The residue at position 269 (Lys-269) is an N6-(pyridoxal phosphate)lysine.

It belongs to the class-III pyridoxal-phosphate-dependent aminotransferase family. HemL subfamily. In terms of assembly, homodimer. Pyridoxal 5'-phosphate is required as a cofactor.

Its subcellular location is the cytoplasm. The enzyme catalyses (S)-4-amino-5-oxopentanoate = 5-aminolevulinate. The protein operates within porphyrin-containing compound metabolism; protoporphyrin-IX biosynthesis; 5-aminolevulinate from L-glutamyl-tRNA(Glu): step 2/2. The chain is Glutamate-1-semialdehyde 2,1-aminomutase from Francisella tularensis subsp. holarctica (strain FTNF002-00 / FTA).